A 155-amino-acid polypeptide reads, in one-letter code: Small ribosomal subunit protein uS7 (155 aa).

Belongs to the universal ribosomal protein uS7 family. As to quaternary structure, part of the 30S ribosomal subunit. Contacts proteins S9 and S11.

Its function is as follows. One of the primary rRNA binding proteins, it binds directly to 16S rRNA where it nucleates assembly of the head domain of the 30S subunit. Is located at the subunit interface close to the decoding center, probably blocks exit of the E-site tRNA. This is Small ribosomal subunit protein uS7 from Chloroherpeton thalassium (strain ATCC 35110 / GB-78).